A 486-amino-acid polypeptide reads, in one-letter code: Glutamyl-tRNA(Gln) amidotransferase subunit A (486 aa).

Catalysis depends on charge relay system residues lysine 77 and serine 152. The active-site Acyl-ester intermediate is the serine 176.

The protein belongs to the amidase family. GatA subfamily. As to quaternary structure, heterotrimer of A, B and C subunits.

The enzyme catalyses L-glutamyl-tRNA(Gln) + L-glutamine + ATP + H2O = L-glutaminyl-tRNA(Gln) + L-glutamate + ADP + phosphate + H(+). In terms of biological role, allows the formation of correctly charged Gln-tRNA(Gln) through the transamidation of misacylated Glu-tRNA(Gln) in organisms which lack glutaminyl-tRNA synthetase. The reaction takes place in the presence of glutamine and ATP through an activated gamma-phospho-Glu-tRNA(Gln). The polypeptide is Glutamyl-tRNA(Gln) amidotransferase subunit A (Lactococcus lactis subsp. cremoris (strain SK11)).